A 218-amino-acid chain; its full sequence is Octanoyltransferase (218 aa).

Residues 31–206 enclose the BPL/LPL catalytic domain; the sequence is REAADEVWLV…QLVKHLDYAE (176 aa). Substrate-binding positions include 70 to 77, 137 to 139, and 150 to 152; these read RGGQVTYH, SLG, and GLA. Catalysis depends on Cys168, which acts as the Acyl-thioester intermediate.

It belongs to the LipB family.

The protein localises to the cytoplasm. It catalyses the reaction octanoyl-[ACP] + L-lysyl-[protein] = N(6)-octanoyl-L-lysyl-[protein] + holo-[ACP] + H(+). Its pathway is protein modification; protein lipoylation via endogenous pathway; protein N(6)-(lipoyl)lysine from octanoyl-[acyl-carrier-protein]: step 1/2. In terms of biological role, catalyzes the transfer of endogenously produced octanoic acid from octanoyl-acyl-carrier-protein onto the lipoyl domains of lipoate-dependent enzymes. Lipoyl-ACP can also act as a substrate although octanoyl-ACP is likely to be the physiological substrate. This Pseudomonas syringae pv. syringae (strain B728a) protein is Octanoyltransferase.